The following is a 424-amino-acid chain: UDP-N-acetylglucosamine 1-carboxyvinyltransferase (424 aa).

22 to 23 is a binding site for phosphoenolpyruvate; sequence KN. Arg96 serves as a coordination point for UDP-N-acetyl-alpha-D-glucosamine. Residue Cys120 is the Proton donor of the active site. Position 120 is a 2-(S-cysteinyl)pyruvic acid O-phosphothioketal (Cys120). UDP-N-acetyl-alpha-D-glucosamine is bound by residues 125 to 129, Asp312, and Ile334; that span reads RPVDQ.

The protein belongs to the EPSP synthase family. MurA subfamily.

Its subcellular location is the cytoplasm. It catalyses the reaction phosphoenolpyruvate + UDP-N-acetyl-alpha-D-glucosamine = UDP-N-acetyl-3-O-(1-carboxyvinyl)-alpha-D-glucosamine + phosphate. The protein operates within cell wall biogenesis; peptidoglycan biosynthesis. Its function is as follows. Cell wall formation. Adds enolpyruvyl to UDP-N-acetylglucosamine. This chain is UDP-N-acetylglucosamine 1-carboxyvinyltransferase, found in Polynucleobacter asymbioticus (strain DSM 18221 / CIP 109841 / QLW-P1DMWA-1) (Polynucleobacter necessarius subsp. asymbioticus).